A 98-amino-acid chain; its full sequence is Small ribosomal subunit protein uS19 (98 aa).

Disordered stretches follow at residues 1 to 30 and 78 to 98; these read MARS…KKSV and RTFH…PAKK. Basic and acidic residues predominate over residues 9–24; the sequence is PFADKHLTKKVEDANK.

It belongs to the universal ribosomal protein uS19 family.

Functionally, protein S19 forms a complex with S13 that binds strongly to the 16S ribosomal RNA. The chain is Small ribosomal subunit protein uS19 from Anaeromyxobacter dehalogenans (strain 2CP-1 / ATCC BAA-258).